We begin with the raw amino-acid sequence, 154 residues long: SsrA-binding protein (154 aa).

This sequence belongs to the SmpB family.

It localises to the cytoplasm. In terms of biological role, required for rescue of stalled ribosomes mediated by trans-translation. Binds to transfer-messenger RNA (tmRNA), required for stable association of tmRNA with ribosomes. tmRNA and SmpB together mimic tRNA shape, replacing the anticodon stem-loop with SmpB. tmRNA is encoded by the ssrA gene; the 2 termini fold to resemble tRNA(Ala) and it encodes a 'tag peptide', a short internal open reading frame. During trans-translation Ala-aminoacylated tmRNA acts like a tRNA, entering the A-site of stalled ribosomes, displacing the stalled mRNA. The ribosome then switches to translate the ORF on the tmRNA; the nascent peptide is terminated with the 'tag peptide' encoded by the tmRNA and targeted for degradation. The ribosome is freed to recommence translation, which seems to be the essential function of trans-translation. The chain is SsrA-binding protein from Acetivibrio thermocellus (strain ATCC 27405 / DSM 1237 / JCM 9322 / NBRC 103400 / NCIMB 10682 / NRRL B-4536 / VPI 7372) (Clostridium thermocellum).